A 264-amino-acid chain; its full sequence is Tryptophan synthase alpha chain (264 aa).

Catalysis depends on proton acceptor residues E49 and D60.

The protein belongs to the TrpA family. Tetramer of two alpha and two beta chains.

It catalyses the reaction (1S,2R)-1-C-(indol-3-yl)glycerol 3-phosphate + L-serine = D-glyceraldehyde 3-phosphate + L-tryptophan + H2O. The protein operates within amino-acid biosynthesis; L-tryptophan biosynthesis; L-tryptophan from chorismate: step 5/5. The alpha subunit is responsible for the aldol cleavage of indoleglycerol phosphate to indole and glyceraldehyde 3-phosphate. In Picosynechococcus sp. (strain ATCC 27264 / PCC 7002 / PR-6) (Agmenellum quadruplicatum), this protein is Tryptophan synthase alpha chain.